A 347-amino-acid chain; its full sequence is Ultraviolet-sensitive opsin (347 aa).

Residues 1–37 (MSGEEEFYLFKNGSIGGPWDGPQYHIAPPWAFYLQTA) are Extracellular-facing. The N-linked (GlcNAc...) asparagine glycan is linked to Asn12. Residues 38 to 58 (FMGFVFMVGTPLNAIVLVVTI) traverse the membrane as a helical segment. The Cytoplasmic portion of the chain corresponds to 59–69 (KYKKLRQPLNY). The helical transmembrane segment at 70–90 (ILVNISFCGFLACIICIFTVF) threads the bilayer. Topologically, residues 91–106 (VSSSQGYFVFGKHVCA) are extracellular. Residues Cys105 and Cys182 are joined by a disulfide bond. Residues 107–127 (FEGFMGATAGLVTGWSLAFLA) traverse the membrane as a helical segment. The Cytoplasmic portion of the chain corresponds to 128–147 (FERYIVICKPLGNFRFTAKH). Residues 148–168 (ALVVVVATWVIGIGVAIPPFF) form a helical membrane-spanning segment. Residues 169 to 197 (GWSRYVPEGLQCSCGPDWYTVGTKYRSEY) lie on the Extracellular side of the membrane. The helical transmembrane segment at 198–218 (YTWFLFIFCFIVPLSLIIFSY) threads the bilayer. Residues 219 to 247 (SQLLSALRAVAAQQQESATTQKAEREVSR) are Cytoplasmic-facing. Residues 248–268 (MVVVMVGSFCVCYVPYAALAM) form a helical membrane-spanning segment. Topologically, residues 269-282 (YMVNNREHGIDLRL) are extracellular. Residues 283–303 (VTIPAFFSKSSCVYNPIIYCF) traverse the membrane as a helical segment. Lys291 is subject to N6-(retinylidene)lysine. The Cytoplasmic segment spans residues 304-347 (MNKQFRGCIMEMVCGKPMTDDSDMSSSAQRTEVSSVSSSQVSPS). Cys317 carries the S-palmitoyl cysteine lipid modification. Residues 324 to 347 (DSDMSSSAQRTEVSSVSSSQVSPS) are disordered. Positions 328-347 (SSSAQRTEVSSVSSSQVSPS) are enriched in low complexity.

The protein belongs to the G-protein coupled receptor 1 family. Opsin subfamily. Post-translationally, phosphorylated on some or all of the serine and threonine residues present in the C-terminal region. Cone photoreceptor cells.

The protein resides in the membrane. Functionally, visual pigments are the light-absorbing molecules that mediate vision. They consist of an apoprotein, opsin, covalently linked to cis-retinal. The chain is Ultraviolet-sensitive opsin from Melopsittacus undulatus (Budgerigar).